The sequence spans 226 residues: PKHD-type hydroxylase Sfri_0612 (226 aa).

The Fe2OG dioxygenase domain maps to 77–177; that stretch reads KIFPPCFNRY…RIAAITWMQS (101 aa). The Fe cation site is built by His95, Asp97, and His158. Residue Arg168 coordinates 2-oxoglutarate.

It depends on Fe(2+) as a cofactor. Requires L-ascorbate as cofactor.

The polypeptide is PKHD-type hydroxylase Sfri_0612 (Shewanella frigidimarina (strain NCIMB 400)).